The primary structure comprises 694 residues: Follicle-stimulating hormone receptor (694 aa).

The signal sequence occupies residues 1-17; sequence MALLLVSLLAFLSLGSG. Cystine bridges form between Cys-18-Cys-25 and Cys-23-Cys-32. The LRRNT domain maps to 18-46; it reads CHHRVCHCSNRVFLCQESKVTEIPSDLPR. Over 18–365 the chain is Extracellular; it reads CHHRVCHCSN…EDIMGYDILR (348 aa). LRR repeat units lie at residues 49–72, 73–97, 98–118, 119–143, 144–169, 170–192, 193–216, 217–240, and 241–259; these read LELR…FGDL, EKIE…LPKL, HEIR…AFQN, LPNL…KIQS, LQKV…MGLS, FEST…AFNG, TQLD…VFQG, ASGP…GLEN, and LKKL…PSLE. Residues Asn-191 and Asn-199 are each glycosylated (N-linked (GlcNAc...) asparagine). An N-linked (GlcNAc...) asparagine glycan is attached at Asn-268. Disulfide bonds link Cys-275–Cys-345, Cys-276–Cys-292, Cys-276–Cys-355, and Cys-292–Cys-337. A glycan (N-linked (GlcNAc...) asparagine) is linked at Asn-293. Tyr-334 is subject to Sulfotyrosine. A helical membrane pass occupies residues 366–386; it reads VLIWFISILAITGNIIVLVIL. At 387 to 397 the chain is on the cytoplasmic side; it reads ITSQYKLTVPR. The chain crosses the membrane as a helical span at residues 398-420; that stretch reads FLMCNLAFADLCIGIYLLLIASV. The Extracellular portion of the chain corresponds to 421–442; that stretch reads DIHTKSQYHNYAIDWQTGAGCD. Cys-441 and Cys-516 are oxidised to a cystine. A helical transmembrane segment spans residues 443–464; that stretch reads AAGFFTVFASELSVYTLTAITL. The Cytoplasmic portion of the chain corresponds to 465–484; the sequence is ERWHTITHAMQLECKVQLRH. A helical transmembrane segment spans residues 485 to 507; it reads AASVMLVGWIFAFAVALLPIFGI. Residues 508 to 527 are Extracellular-facing; the sequence is STYMKVSICLPMDIDSPLSQ. Residues 528 to 549 traverse the membrane as a helical segment; the sequence is LYVMSLLVLNVLAFVVICGCYI. Residues 550 to 572 are Cytoplasmic-facing; it reads HIYLTVRNPNIVSSSSDTKIAKR. The chain crosses the membrane as a helical span at residues 573–596; the sequence is MAILIFTDFLCMAPISFFAISASL. The Extracellular segment spans residues 597 to 607; the sequence is KVPLITVSKSK. Residues 608 to 629 form a helical membrane-spanning segment; that stretch reads ILLVLFYPINSCANPFLYAIFT. Over 630-694 the chain is Cytoplasmic; sequence KNFRRDFFIL…LVPLSHLAQN (65 aa).

This sequence belongs to the G-protein coupled receptor 1 family. FSH/LSH/TSH subfamily. As to quaternary structure, homotrimer. Functions as a homotrimer binding the FSH hormone heterodimer composed of CGA and FSHB. Interacts with ARRB2. Interacts with APPL2; interaction is independent of follicle stimulating hormone stimulation. Post-translationally, N-glycosylated; indirectly required for FSH-binding, possibly via a conformational change that allows high affinity binding of hormone. In terms of processing, sulfated.

Its subcellular location is the cell membrane. Its function is as follows. G protein-coupled receptor for follitropin, the follicle-stimulating hormone. Through cAMP production activates the downstream PI3K-AKT and ERK1/ERK2 signaling pathways. The chain is Follicle-stimulating hormone receptor (FSHR) from Equus caballus (Horse).